A 95-amino-acid chain; its full sequence is Large ribosomal subunit protein uL22c (95 aa).

It belongs to the universal ribosomal protein uL22 family. Part of the 50S ribosomal subunit.

It localises to the plastid. It is found in the chloroplast. In terms of biological role, this protein binds specifically to 23S rRNA. Functionally, the globular domain of the protein is located near the polypeptide exit tunnel on the outside of the subunit, while an extended beta-hairpin is found that lines the wall of the exit tunnel in the center of the 70S ribosome. The chain is Large ribosomal subunit protein uL22c (rpl22) from Cyanidioschyzon merolae (strain NIES-3377 / 10D) (Unicellular red alga).